The chain runs to 438 residues: Trigger factor (438 aa).

The 86-residue stretch at 163 to 248 (GEIAVLDFAA…VHAVKERKLP (86 aa)) folds into the PPIase FKBP-type domain.

The protein belongs to the FKBP-type PPIase family. Tig subfamily.

The protein resides in the cytoplasm. The catalysed reaction is [protein]-peptidylproline (omega=180) = [protein]-peptidylproline (omega=0). Functionally, involved in protein export. Acts as a chaperone by maintaining the newly synthesized protein in an open conformation. Functions as a peptidyl-prolyl cis-trans isomerase. This chain is Trigger factor, found in Oleidesulfovibrio alaskensis (strain ATCC BAA-1058 / DSM 17464 / G20) (Desulfovibrio alaskensis).